The following is a 241-amino-acid chain: Aspartate/glutamate leucyltransferase (241 aa).

This sequence belongs to the R-transferase family. Bpt subfamily.

It localises to the cytoplasm. It catalyses the reaction N-terminal L-glutamyl-[protein] + L-leucyl-tRNA(Leu) = N-terminal L-leucyl-L-glutamyl-[protein] + tRNA(Leu) + H(+). It carries out the reaction N-terminal L-aspartyl-[protein] + L-leucyl-tRNA(Leu) = N-terminal L-leucyl-L-aspartyl-[protein] + tRNA(Leu) + H(+). Its function is as follows. Functions in the N-end rule pathway of protein degradation where it conjugates Leu from its aminoacyl-tRNA to the N-termini of proteins containing an N-terminal aspartate or glutamate. In Parvibaculum lavamentivorans (strain DS-1 / DSM 13023 / NCIMB 13966), this protein is Aspartate/glutamate leucyltransferase.